Consider the following 238-residue polypeptide: uncharacterized protein (238 aa).

It belongs to the chlamydial CPn_0658/CT_538/TC_0825 family.

This is an uncharacterized protein from Chlamydia muridarum (strain MoPn / Nigg).